The following is a 174-amino-acid chain: Translation initiation factor IF-3 (174 aa).

It belongs to the IF-3 family. As to quaternary structure, monomer.

The protein localises to the cytoplasm. In terms of biological role, IF-3 binds to the 30S ribosomal subunit and shifts the equilibrium between 70S ribosomes and their 50S and 30S subunits in favor of the free subunits, thus enhancing the availability of 30S subunits on which protein synthesis initiation begins. In Xanthobacter autotrophicus (strain ATCC BAA-1158 / Py2), this protein is Translation initiation factor IF-3.